The chain runs to 519 residues: uncharacterized protein (519 aa).

Transmembrane regions (helical) follow at residues 141–161, 202–222, 385–405, and 433–453; these read GSSLLPYGAGAASCFGAANVF, LGETHLVGLGAIGHGALWALA, FVVRVATAMGVPFEPLAPFVG, and TVVPMAFQSALAGIMLAAELV.

It is found in the cell membrane. This is an uncharacterized protein from Sinorhizobium fredii (strain NBRC 101917 / NGR234).